Here is a 317-residue protein sequence, read N- to C-terminus: Multivesicular body subunit 12B (317 aa).

Positions 1-49 (MRSCFCVRRSRDPPPPQPPPPQRGTDQATMPEVKELSEALPETPMDPIT) are disordered. Over residues 13-22 (PPPPQPPPPQ) the composition is skewed to pro residues. The MABP domain occupies 45-191 (MDPITGVGVV…SMGIWYRMGR (147 aa)). Residue serine 99 is modified to Phosphoserine. Threonine 120, threonine 202, and threonine 203 each carry phosphothreonine. Positions 193-218 (PRNHDSSQPTTPSQSSASSTPAPNLP) are disordered. Positions 198-214 (SSQPTTPSQSSASSTPA) are enriched in low complexity. Serine 222 carries the post-translational modification Phosphoserine. The UMA domain maps to 252 to 301 (MDGVPFMISEKFSCIPESMQPFDLLGITIKSLAEIEKEYEYSFRTEQSAA). Positions 297–317 (EQSAAARLPPSPTRCQQIPQS) are disordered. Serine 307 is modified (phosphoserine).

This sequence belongs to the MVB12 family. In terms of assembly, component of the ESCRT-I complex (endosomal sorting complex required for transport I) which consists of TSG101, VPS28, a VPS37 protein (VPS37A to -D) and MVB12A or MVB12B in a 1:1:1:1 stoichiometry. Interacts with TSG101; the association appears to be mediated by the TSG101-VPS37 binary subcomplex. Interacts with VPS28. Interacts with VPS37B; the association appears to be mediated by the TSG101-VPS37 binary subcomplex. Interacts with VPS37C; the association appears to be mediated by the TSG101-VPS37 binary subcomplex.

Its subcellular location is the endosome. The protein localises to the late endosome membrane. Component of the ESCRT-I complex, a regulator of vesicular trafficking process. Required for the sorting of endocytic ubiquitinated cargos into multivesicular bodies. In Mus musculus (Mouse), this protein is Multivesicular body subunit 12B (Mvb12b).